The primary structure comprises 152 residues: Small ribosomal subunit protein uS19 (152 aa).

The protein belongs to the universal ribosomal protein uS19 family.

This Podospora anserina (Pleurage anserina) protein is Small ribosomal subunit protein uS19 (RPS15).